The following is a 921-amino-acid chain: cGMP-dependent 3',5'-cyclic phosphodiesterase (921 aa).

N-acetylmethionine is present on M1. Disordered regions lie at residues 1–21 (MRRQPAASRDLFAQEPVPPGS) and 177–198 (ESSVAPEATQNPPEEAAGDQKG). The segment covering 177–188 (ESSVAPEATQNP) has biased composition (polar residues). 2 consecutive GAF domains span residues 220–357 (DASS…STVL) and 389–528 (DVSV…GISI). 5 residues coordinate 3',5'-cyclic GMP: S411, D426, I445, Y468, and T479. Residues 558–882 (SDDEYTKLLH…EHWTKVSHKF (325 aa)) form the PDEase domain. H636 (proton donor) is an active-site residue. The Zn(2+) site is built by H640, H676, D677, and D788. Position 677 (D677) interacts with Mg(2+).

The protein belongs to the cyclic nucleotide phosphodiesterase family. PDE2 subfamily. In terms of assembly, homodimer. Zn(2+) is required as a cofactor. Requires Mg(2+) as cofactor.

The protein resides in the cell membrane. Its subcellular location is the cytoplasm. It is found in the mitochondrion. The protein localises to the mitochondrion inner membrane. It localises to the mitochondrion outer membrane. The catalysed reaction is a nucleoside 3',5'-cyclic phosphate + H2O = a nucleoside 5'-phosphate + H(+). It carries out the reaction 3',5'-cyclic GMP + H2O = GMP + H(+). The enzyme catalyses 3',5'-cyclic AMP + H2O = AMP + H(+). The 3',5'-cyclic-AMP phosphodiesterase activity is stimulated by 3',5'-cyclic GMP. Its function is as follows. cGMP-activated cyclic nucleotide phosphodiesterase with a dual-specificity for the second messengers cAMP and cGMP, which are key regulators of many important physiological processes. Has a higher efficiency with cGMP compared to cAMP. Plays a role in cell growth and migration. Functionally, regulates mitochondrial cAMP levels and respiration. Involved in the regulation of mitochondria morphology/dynamics and apoptotic cell death via local modulation of cAMP/PKA signaling in the mitochondrion, including the monitoring of local cAMP levels at the outer mitochondrial membrane and of PKA-dependent phosphorylation of DNM1L. This is cGMP-dependent 3',5'-cyclic phosphodiesterase from Bos taurus (Bovine).